The primary structure comprises 302 residues: Aspartate carbamoyltransferase catalytic subunit (302 aa).

Carbamoyl phosphate contacts are provided by R51 and T52. K80 lines the L-aspartate pocket. R101, H129, and Q132 together coordinate carbamoyl phosphate. Residues R162 and R224 each coordinate L-aspartate. Carbamoyl phosphate is bound by residues L263 and P264.

This sequence belongs to the aspartate/ornithine carbamoyltransferase superfamily. ATCase family. In terms of assembly, heterododecamer (2C3:3R2) of six catalytic PyrB chains organized as two trimers (C3), and six regulatory PyrI chains organized as three dimers (R2).

The enzyme catalyses carbamoyl phosphate + L-aspartate = N-carbamoyl-L-aspartate + phosphate + H(+). The protein operates within pyrimidine metabolism; UMP biosynthesis via de novo pathway; (S)-dihydroorotate from bicarbonate: step 2/3. In terms of biological role, catalyzes the condensation of carbamoyl phosphate and aspartate to form carbamoyl aspartate and inorganic phosphate, the committed step in the de novo pyrimidine nucleotide biosynthesis pathway. In Azobacteroides pseudotrichonymphae genomovar. CFP2, this protein is Aspartate carbamoyltransferase catalytic subunit.